The following is an 889-amino-acid chain: Alanine--tRNA ligase (889 aa).

Zn(2+) contacts are provided by H569, H573, C671, and H675.

Belongs to the class-II aminoacyl-tRNA synthetase family. Zn(2+) serves as cofactor.

The protein localises to the cytoplasm. It carries out the reaction tRNA(Ala) + L-alanine + ATP = L-alanyl-tRNA(Ala) + AMP + diphosphate. Catalyzes the attachment of alanine to tRNA(Ala) in a two-step reaction: alanine is first activated by ATP to form Ala-AMP and then transferred to the acceptor end of tRNA(Ala). Also edits incorrectly charged Ser-tRNA(Ala) and Gly-tRNA(Ala) via its editing domain. The chain is Alanine--tRNA ligase from Synechococcus sp. (strain CC9605).